We begin with the raw amino-acid sequence, 703 residues long: DnaJ homolog subfamily C member 14 (703 aa).

A compositionally biased stretch (basic and acidic residues) spans 1-11; sequence MAQKHPGERRL. The segment at 1–229 is disordered; the sequence is MAQKHPGERR…GRHRLARKRS (229 aa). Positions 17–28 are enriched in low complexity; that stretch reads SGGTSLSTSGSS. A compositionally biased stretch (pro residues) spans 75-84; that stretch reads HGPPRGPGPP. A compositionally biased stretch (acidic residues) spans 91-102; sequence DESETGSEESGV. Residues 121–133 show a composition bias toward polar residues; that stretch reads SFLSIPSACNCQG. Residues 163–176 show a composition bias toward acidic residues; that stretch reads GEDEELEEEYDDEE. The span at 193 to 202 shows a compositional bias: basic residues; the sequence is PLSRRQKHRF. A compositionally biased stretch (basic and acidic residues) spans 203 to 218; sequence LIKEDVRDSGRREPKA. A compositionally biased stretch (basic residues) spans 219-228; the sequence is PGRHRLARKR. A run of 2 helical transmembrane segments spans residues 305-325 and 327-347; these read MMFQ…IRIL and VVGA…QLGW. The 65-residue stretch at 444–508 folds into the J domain; the sequence is NPFHVLGVEA…ERRKEYEMKR (65 aa). Disordered stretches follow at residues 622–643 and 659–703; these read FGSR…PPAD and MSNG…PFQR. Over residues 673–684 the composition is skewed to polar residues; it reads GTTSTSRPNSSV. The segment covering 691 to 703 has biased composition (basic residues); that stretch reads PKRRKKVRRPFQR.

As to quaternary structure, interacts with the FxxxFxxxF motif of DRD1 via its C-terminal domain.

Its subcellular location is the endoplasmic reticulum membrane. In terms of biological role, regulates the export of target proteins, such as DRD1, from the endoplasmic reticulum to the cell surface. The chain is DnaJ homolog subfamily C member 14 (Dnajc14) from Mus musculus (Mouse).